Reading from the N-terminus, the 174-residue chain is Protein GrpE (174 aa).

Positions 1–35 are disordered; the sequence is MAQDIKNEEVEEVQEEEVVETAEETTPEKSELDLA. Positions 9–25 are enriched in acidic residues; that stretch reads EVEEVQEEEVVETAEET. A compositionally biased stretch (basic and acidic residues) spans 26 to 35; sequence TPEKSELDLA.

Belongs to the GrpE family. Homodimer.

It is found in the cytoplasm. Its function is as follows. Participates actively in the response to hyperosmotic and heat shock by preventing the aggregation of stress-denatured proteins, in association with DnaK and GrpE. It is the nucleotide exchange factor for DnaK and may function as a thermosensor. Unfolded proteins bind initially to DnaJ; upon interaction with the DnaJ-bound protein, DnaK hydrolyzes its bound ATP, resulting in the formation of a stable complex. GrpE releases ADP from DnaK; ATP binding to DnaK triggers the release of the substrate protein, thus completing the reaction cycle. Several rounds of ATP-dependent interactions between DnaJ, DnaK and GrpE are required for fully efficient folding. The sequence is that of Protein GrpE from Streptococcus pneumoniae (strain ATCC 700669 / Spain 23F-1).